The primary structure comprises 56 residues: MFTVFLLVVLATAVVSFTSDRASDDGKAAASDLITLTIKGCCSRPPCIANNPDLCG.

The signal sequence occupies residues 1 to 16 (MFTVFLLVVLATAVVS). A propeptide spanning residues 17-39 (FTSDRASDDGKAAASDLITLTIK) is cleaved from the precursor. Disulfide bonds link cysteine 41/cysteine 47 and cysteine 42/cysteine 55. The ser-Xaa-Pro motif, crucial for potent interaction with nAChR stretch occupies residues 43–45 (SRP). Residues proline 45 and proline 46 each carry the 4-hydroxyproline; partial modification. Cysteine 55 is subject to Cysteine amide.

The protein belongs to the conotoxin A superfamily. Exists in 4 different forms, depending on hydroxylations. Tx1a-PP does not contain hydroxyproline, tx1a-OP has one hydroxyproline at position 45, tx1a-PO has one hydroxyproline at position 46, and tx1a-PP has two hydroxyprolines at positions 45 and 46. As to expression, expressed by the venom duct. Tx1a that containing 1 or 2 non-hydroxylated prolines are mostly present in part 5 of the venom duct (distal part near the pharynx), whereas tx1a-OO (with 2 hydroxyprolines) is mostly present in part 4 of the venom duct (follewed by part 3).

The protein resides in the secreted. In terms of biological role, alpha-conotoxins act on postsynaptic membranes, they bind to the nicotinic acetylcholine receptors (nAChR) and thus inhibit them. This toxin inhibits rat alpha-3-beta-2/CHRNA3-CHRNB2 (IC(50)=3.5 nM), rat alpha-7/CHRNA7 (IC(50)=392 nM) nAChR, and the L.stagnalis soluble acetylcholine receptor (all tested without hydroxyproline). The protein is Alpha-conotoxin TxIA of Conus textile (Cloth-of-gold cone).